A 312-amino-acid chain; its full sequence is ADP-L-glycero-D-manno-heptose-6-epimerase (312 aa).

Residues 10-11, 31-32, Lys-38, Lys-53, 75-79, and Asn-92 contribute to the NADP(+) site; these read FI, DN, and EGACS. Tyr-140 functions as the Proton acceptor in the catalytic mechanism. Lys-144 contributes to the NADP(+) binding site. Asn-169 serves as a coordination point for substrate. Residues Val-170 and Lys-178 each coordinate NADP(+). Catalysis depends on Lys-178, which acts as the Proton acceptor. Residues Ser-180, His-187, 201–204, Arg-209, and Tyr-274 contribute to the substrate site; that span reads FEGS.

Belongs to the NAD(P)-dependent epimerase/dehydratase family. HldD subfamily. Homopentamer. NADP(+) is required as a cofactor.

The catalysed reaction is ADP-D-glycero-beta-D-manno-heptose = ADP-L-glycero-beta-D-manno-heptose. The protein operates within nucleotide-sugar biosynthesis; ADP-L-glycero-beta-D-manno-heptose biosynthesis; ADP-L-glycero-beta-D-manno-heptose from D-glycero-beta-D-manno-heptose 7-phosphate: step 4/4. Functionally, catalyzes the interconversion between ADP-D-glycero-beta-D-manno-heptose and ADP-L-glycero-beta-D-manno-heptose via an epimerization at carbon 6 of the heptose. The chain is ADP-L-glycero-D-manno-heptose-6-epimerase from Proteus mirabilis (strain HI4320).